The primary structure comprises 369 residues: O-methyltransferase 12 (369 aa).

S-adenosyl-L-methionine-binding positions include Gly-181, Asp-204, 229-231, Asp-230, Phe-231, and Lys-244; that span reads GDF. The active-site Proton acceptor is the His-248.

Belongs to the class I-like SAM-binding methyltransferase superfamily. Cation-independent O-methyltransferase family. COMT subfamily.

The enzyme catalyses resorcinol + S-adenosyl-L-methionine = 3-methoxyphenol + S-adenosyl-L-homocysteine + H(+). S-adenosyl-L-methionine dependent O-methyltransferase that may be involved in modifying resorcinol ring to synthesize a variant of 4-methyl-5-pentylbenzene-1,3-diol. The sequence is that of O-methyltransferase 12 (omt12) from Dictyostelium discoideum (Social amoeba).